The primary structure comprises 453 residues: MAKRRQKKRTHAQITPEQERDIPKSMVIRVGQTSLANHSLNQLVKDFRQIMQPHTAVKLKERKSNKLKDFVVMCGPLGVTHLFMFTQSEKTGNVSLKIARTPQGPTVTFQVLDYSLGRDIKKFLKRPKSLNNDDVLNPPLLVLNGFSTSKRSDEDDQDVNVEKVIVSMFQNIFPPLNPARTSLNSIKRIFMINKDRETGEISMRHYFIDIREVEISRNLKRLYKAKNNLSKTVPNLHRKEDISSLILDHDLGAYTSESEIEDDAIVRVVDNQDVKAKHSQTSLSQKTPVKMTDNEEREKGIEEEDVEMEEPKPSENSQPTPRKKAIKLTELGPRLTLKLVKIEDGICSGKVLHHEFVQKSSEEIKALEKRHAAKMRLKEQRRKEQEENIAKKKAVKDAKKQRKLERRKARAEEQGEGQGKDGAMSDDGSSSSEDEHYSDVPEDLDSDLFSEVE.

Residues 1 to 11 (MAKRRQKKRTH) show a composition bias toward basic residues. 3 disordered regions span residues 1–22 (MAKR…ERDI), 275–327 (KAKH…KAIK), and 373–453 (AKMR…SEVE). Positions 26 to 348 (MVIRVGQTSL…LVKIEDGICS (323 aa)) constitute a Brix domain. Over residues 373–398 (AKMRLKEQRRKEQEENIAKKKAVKDA) the composition is skewed to basic and acidic residues. The segment covering 399-409 (KKQRKLERRKA) has biased composition (basic residues). Positions 440–453 (VPEDLDSDLFSEVE) are enriched in acidic residues.

In terms of assembly, part of a complex that includes BRX1, RPF1, RPF2 and SSF1 or SSF2.

Its subcellular location is the nucleus. The protein resides in the nucleolus. In terms of biological role, required for biogenesis of the 60S ribosomal subunit. This is Ribosome biogenesis protein SSF2 (SSF2) from Saccharomyces cerevisiae (strain ATCC 204508 / S288c) (Baker's yeast).